The sequence spans 427 residues: Diaminobutyrate--2-oxoglutarate transaminase (427 aa).

N6-(pyridoxal phosphate)lysine is present on Lys269.

The protein belongs to the class-III pyridoxal-phosphate-dependent aminotransferase family. Pyridoxal 5'-phosphate is required as a cofactor.

The catalysed reaction is L-2,4-diaminobutanoate + 2-oxoglutarate = L-aspartate 4-semialdehyde + L-glutamate. It functions in the pathway amine and polyamine biosynthesis; ectoine biosynthesis; L-ectoine from L-aspartate 4-semialdehyde: step 1/3. Functionally, catalyzes reversively the conversion of L-aspartate beta-semialdehyde (ASA) to L-2,4-diaminobutyrate (DABA) by transamination with L-glutamate. The protein is Diaminobutyrate--2-oxoglutarate transaminase (ectB) of Halalkalibacterium halodurans (strain ATCC BAA-125 / DSM 18197 / FERM 7344 / JCM 9153 / C-125) (Bacillus halodurans).